The following is a 2242-amino-acid chain: Transcription factor sma-9 (2242 aa).

A coiled-coil region spans residues 120 to 383 (HQLAQQQAQQ…QQAQQAQLAQ (264 aa)). Residues 317-330 (AAQQAQAQNNASQQ) are compositionally biased toward low complexity. Disordered stretches follow at residues 317 to 344 (AAQQAQAQNNASQQRPSVASTPALSSTP), 494 to 553 (TPVA…SMSD), 583 to 617 (GAQSSVDHDSNSGGSTRTSPGPKDSRMLQAASRSQ), 712 to 754 (LAAH…SSFP), and 1323 to 1349 (EDSTSAEPSTSGQSLLMRSPRPQSPPL). A compositionally biased stretch (polar residues) spans 331 to 344 (RPSVASTPALSSTP). 2 stretches are compositionally biased toward low complexity: residues 494–523 (TPVAVPPMKQNSNPSMNPSSTSTSASATSS) and 539–550 (SSSKAASSGNES). Positions 583–601 (GAQSSVDHDSNSGGSTRTS) are enriched in polar residues. The segment covering 1324-1338 (DSTSAEPSTSGQSLL) has biased composition (polar residues). 5 consecutive C2H2-type zinc fingers follow at residues 1447 to 1469 (YICDRCGIRCKKPSMLKKHIKSH), 1475 to 1499 (FNCTACNFSFKTKGNLTKHLSSKTH), 1700 to 1722 (LKCDQCDRTFRKISDLTLHQHTH), 1734 to 1760 (YQCSECKIPIRTKAQLQKHLERNHGVH), and 1790 to 1814 (FMCVDCDIGFRKHGILAKHLRSKTH). Low complexity predominate over residues 2029–2039 (SITSPIVSSST). 2 disordered regions span residues 2029-2059 (SITSPIVSSSTNFSYRKRSESSLSGSSPTHT) and 2085-2107 (STDKAHASESLSDRLHNKRPRPI). Residues 2085–2099 (STDKAHASESLSDRL) are compositionally biased toward basic and acidic residues. 2 C2H2-type zinc fingers span residues 2111–2134 (TKCQICADEFSTPIELQVHLHVDH) and 2143–2167 (YKCPRKFCGLNYESLDSLRAHVTAH). The disordered stretch occupies residues 2219–2242 (HELYAQTQQGAGSSTSNQSPKAAN). Polar residues predominate over residues 2223-2242 (AQTQQGAGSSTSNQSPKAAN).

In terms of tissue distribution, expressed in the ventral nerve cord (VNC), pharynx, intestine and seam cells (at protein level).

Its subcellular location is the nucleus. Its function is as follows. Transcription factor, probably acting as a transcriptional activator and repressor, involved in the TGF-beta-like dbl-1 signaling pathway. Plays a role in regulation of body size, and patterning of male-specific genital sensilla (simple sense organs), known as rays, and mating-associated structures, spicules. Required for the dorsoventral patterning of the postembryonic mesodermal lineage (M lineage), acting by antagonizing the TGF-beta-like dbl-1 signaling pathway, in part by repressing expression of transcription factor unc-130. Involved in egg-laying, perhaps via modulation of cholinergic neurotransmission. Involved in production of reactive oxygen species (ROS), acting downstream of the dbl-1 signaling pathway. Plays a role in the mitochondrial unfolded protein response (mtUPR). May play a role in modulating lifespan and in responses to proteotoxic stress. In terms of biological role, transcription factor, probably acting as a transcriptional activator. Required for patterning of male-specific genital sensilla (simple sense organs), known as rays. Dispensable for regulation of body size. The chain is Transcription factor sma-9 from Caenorhabditis elegans.